A 174-amino-acid polypeptide reads, in one-letter code: Crossover junction endodeoxyribonuclease RuvC (174 aa).

Active-site residues include aspartate 8, glutamate 67, and aspartate 139. Residues aspartate 8, glutamate 67, and aspartate 139 each contribute to the Mg(2+) site.

It belongs to the RuvC family. In terms of assembly, homodimer which binds Holliday junction (HJ) DNA. The HJ becomes 2-fold symmetrical on binding to RuvC with unstacked arms; it has a different conformation from HJ DNA in complex with RuvA. In the full resolvosome a probable DNA-RuvA(4)-RuvB(12)-RuvC(2) complex forms which resolves the HJ. Mg(2+) is required as a cofactor.

It is found in the cytoplasm. The enzyme catalyses Endonucleolytic cleavage at a junction such as a reciprocal single-stranded crossover between two homologous DNA duplexes (Holliday junction).. Its function is as follows. The RuvA-RuvB-RuvC complex processes Holliday junction (HJ) DNA during genetic recombination and DNA repair. Endonuclease that resolves HJ intermediates. Cleaves cruciform DNA by making single-stranded nicks across the HJ at symmetrical positions within the homologous arms, yielding a 5'-phosphate and a 3'-hydroxyl group; requires a central core of homology in the junction. The consensus cleavage sequence is 5'-(A/T)TT(C/G)-3'. Cleavage occurs on the 3'-side of the TT dinucleotide at the point of strand exchange. HJ branch migration catalyzed by RuvA-RuvB allows RuvC to scan DNA until it finds its consensus sequence, where it cleaves and resolves the cruciform DNA. The sequence is that of Crossover junction endodeoxyribonuclease RuvC from Pseudomonas fluorescens (strain ATCC BAA-477 / NRRL B-23932 / Pf-5).